The following is a 449-amino-acid chain: Glucose-6-phosphate isomerase (449 aa).

Glu-291 serves as the catalytic Proton donor. Active-site residues include His-312 and Lys-426.

This sequence belongs to the GPI family.

It localises to the cytoplasm. The catalysed reaction is alpha-D-glucose 6-phosphate = beta-D-fructose 6-phosphate. The protein operates within carbohydrate biosynthesis; gluconeogenesis. It functions in the pathway carbohydrate degradation; glycolysis; D-glyceraldehyde 3-phosphate and glycerone phosphate from D-glucose: step 2/4. Its function is as follows. Catalyzes the reversible isomerization of glucose-6-phosphate to fructose-6-phosphate. This Enterococcus faecalis (strain ATCC 700802 / V583) protein is Glucose-6-phosphate isomerase.